A 349-amino-acid chain; its full sequence is tRNA N6-adenosine threonylcarbamoyltransferase (349 aa).

Fe cation is bound by residues H113 and H117. Residues 135-139 (LVSGG), D169, G182, D186, and N281 each bind substrate. Fe cation is bound at residue D309.

The protein belongs to the KAE1 / TsaD family. Fe(2+) is required as a cofactor.

It localises to the cytoplasm. The enzyme catalyses L-threonylcarbamoyladenylate + adenosine(37) in tRNA = N(6)-L-threonylcarbamoyladenosine(37) in tRNA + AMP + H(+). Its function is as follows. Required for the formation of a threonylcarbamoyl group on adenosine at position 37 (t(6)A37) in tRNAs that read codons beginning with adenine. Is involved in the transfer of the threonylcarbamoyl moiety of threonylcarbamoyl-AMP (TC-AMP) to the N6 group of A37, together with TsaE and TsaB. TsaD likely plays a direct catalytic role in this reaction. The chain is tRNA N6-adenosine threonylcarbamoyltransferase from Corynebacterium aurimucosum (strain ATCC 700975 / DSM 44827 / CIP 107346 / CN-1) (Corynebacterium nigricans).